We begin with the raw amino-acid sequence, 125 residues long: Fluoride-specific ion channel FluC (125 aa).

The next 4 membrane-spanning stretches (helical) occupy residues 9–29 (LFCA…YGLL), 32–52 (AFPY…GLIM), 67–87 (IGLT…SYET), and 99–119 (AFTN…LGII). Residues glycine 75 and threonine 78 each contribute to the Na(+) site.

It belongs to the fluoride channel Fluc/FEX (TC 1.A.43) family.

It localises to the cell inner membrane. The enzyme catalyses fluoride(in) = fluoride(out). With respect to regulation, na(+) is not transported, but it plays an essential structural role and its presence is essential for fluoride channel function. Fluoride-specific ion channel. Important for reducing fluoride concentration in the cell, thus reducing its toxicity. This Trichlorobacter lovleyi (strain ATCC BAA-1151 / DSM 17278 / SZ) (Geobacter lovleyi) protein is Fluoride-specific ion channel FluC.